The sequence spans 166 residues: CDP-archaeol synthase (166 aa).

5 consecutive transmembrane segments (helical) span residues 1 to 21 (MPII…LVAN), 55 to 75 (LLVA…FLGI), 78 to 98 (IYVS…GAFI), 110 to 130 (AIGL…IISK), and 131 to 151 (ISLN…LHIL).

This sequence belongs to the CDP-archaeol synthase family. It depends on Mg(2+) as a cofactor.

The protein resides in the cell membrane. It carries out the reaction 2,3-bis-O-(geranylgeranyl)-sn-glycerol 1-phosphate + CTP + H(+) = CDP-2,3-bis-O-(geranylgeranyl)-sn-glycerol + diphosphate. The protein operates within membrane lipid metabolism; glycerophospholipid metabolism. Its function is as follows. Catalyzes the formation of CDP-2,3-bis-(O-geranylgeranyl)-sn-glycerol (CDP-archaeol) from 2,3-bis-(O-geranylgeranyl)-sn-glycerol 1-phosphate (DGGGP) and CTP. This reaction is the third ether-bond-formation step in the biosynthesis of archaeal membrane lipids. The polypeptide is CDP-archaeol synthase (Sulfurisphaera tokodaii (strain DSM 16993 / JCM 10545 / NBRC 100140 / 7) (Sulfolobus tokodaii)).